A 516-amino-acid chain; its full sequence is 1-pyrroline-5-carboxylate dehydrogenase (516 aa).

Catalysis depends on residues glutamate 287 and cysteine 321.

It belongs to the aldehyde dehydrogenase family. RocA subfamily.

The enzyme catalyses L-glutamate 5-semialdehyde + NAD(+) + H2O = L-glutamate + NADH + 2 H(+). The protein operates within amino-acid degradation; L-proline degradation into L-glutamate; L-glutamate from L-proline: step 2/2. This is 1-pyrroline-5-carboxylate dehydrogenase from Bacillus licheniformis (strain ATCC 14580 / DSM 13 / JCM 2505 / CCUG 7422 / NBRC 12200 / NCIMB 9375 / NCTC 10341 / NRRL NRS-1264 / Gibson 46).